Consider the following 312-residue polypeptide: Glyoxylate/hydroxypyruvate reductase A (312 aa).

R227 is a catalytic residue. H275 functions as the Proton donor in the catalytic mechanism.

It belongs to the D-isomer specific 2-hydroxyacid dehydrogenase family. GhrA subfamily.

The protein resides in the cytoplasm. It carries out the reaction glycolate + NADP(+) = glyoxylate + NADPH + H(+). The enzyme catalyses (R)-glycerate + NAD(+) = 3-hydroxypyruvate + NADH + H(+). It catalyses the reaction (R)-glycerate + NADP(+) = 3-hydroxypyruvate + NADPH + H(+). Its function is as follows. Catalyzes the NADPH-dependent reduction of glyoxylate and hydroxypyruvate into glycolate and glycerate, respectively. This Escherichia coli (strain 55989 / EAEC) protein is Glyoxylate/hydroxypyruvate reductase A.